We begin with the raw amino-acid sequence, 79 residues long: Three-finger toxin A2 (79 aa).

An N-terminal signal peptide occupies residues 1–21 (MKTLLLTLVVVTIVCLDLGNS). Disulfide bonds link Cys-24–Cys-41, Cys-34–Cys-59, Cys-63–Cys-71, and Cys-72–Cys-77.

Belongs to the three-finger toxin family. Short-chain subfamily. As to expression, expressed by the venom gland.

It is found in the secreted. This Micrurus laticollaris (Balsas coral snake) protein is Three-finger toxin A2.